A 424-amino-acid chain; its full sequence is Histidine--tRNA ligase (424 aa).

Belongs to the class-II aminoacyl-tRNA synthetase family. In terms of assembly, homodimer.

Its subcellular location is the cytoplasm. It catalyses the reaction tRNA(His) + L-histidine + ATP = L-histidyl-tRNA(His) + AMP + diphosphate + H(+). This is Histidine--tRNA ligase from Staphylococcus epidermidis (strain ATCC 12228 / FDA PCI 1200).